Here is a 714-residue protein sequence, read N- to C-terminus: P-loop NTPase domain-containing protein LPA1 (714 aa).

A compositionally biased stretch (low complexity) spans 1–11; the sequence is MPMPPQCASSK. Disordered stretches follow at residues 1-42, 259-293, and 595-689; these read MPMP…PPPK, QKLD…PRTE, and FGSE…GSGN. Residues 271-285 show a composition bias toward basic and acidic residues; the sequence is EGRDDTSDDKAHHGS. Over residues 595-617 the composition is skewed to acidic residues; that stretch reads FGSEEDADDPPDAGTDEDLTDEE. Basic and acidic residues predominate over residues 618-636; that stretch reads RDMHEIEAGSVDEHSTKSD. Polar residues predominate over residues 659–670; it reads AASSTKNSSNQE.

Expressed in roots, leaf blade shoots, leaf sheath shoots and panicles.

Functionally, required for the accumulation of phytic acid in seeds. Phytic acid is the primary storage form of phosphorus in cereal grains and other plant seeds. This is P-loop NTPase domain-containing protein LPA1 from Oryza sativa subsp. japonica (Rice).